The chain runs to 169 residues: Peptide deformylase (169 aa).

Positions 91 and 133 each coordinate Fe cation. Glu134 is an active-site residue. His137 serves as a coordination point for Fe cation.

This sequence belongs to the polypeptide deformylase family. Fe(2+) is required as a cofactor.

The enzyme catalyses N-terminal N-formyl-L-methionyl-[peptide] + H2O = N-terminal L-methionyl-[peptide] + formate. Removes the formyl group from the N-terminal Met of newly synthesized proteins. Requires at least a dipeptide for an efficient rate of reaction. N-terminal L-methionine is a prerequisite for activity but the enzyme has broad specificity at other positions. In Haemophilus influenzae (strain ATCC 51907 / DSM 11121 / KW20 / Rd), this protein is Peptide deformylase.